The sequence spans 159 residues: 2-C-methyl-D-erythritol 2,4-cyclodiphosphate synthase (159 aa).

2 residues coordinate a divalent metal cation: Asp8 and His10. 4-CDP-2-C-methyl-D-erythritol 2-phosphate-binding positions include 8–10 (DVH) and 34–35 (HS). His42 contributes to the a divalent metal cation binding site. 4-CDP-2-C-methyl-D-erythritol 2-phosphate contacts are provided by residues 56 to 58 (DIG), 61 to 65 (FPDTD), 100 to 106 (AQAPKML), 132 to 135 (TTTE), Phe139, and Arg142.

This sequence belongs to the IspF family. As to quaternary structure, homotrimer. The cofactor is a divalent metal cation.

It carries out the reaction 4-CDP-2-C-methyl-D-erythritol 2-phosphate = 2-C-methyl-D-erythritol 2,4-cyclic diphosphate + CMP. It functions in the pathway isoprenoid biosynthesis; isopentenyl diphosphate biosynthesis via DXP pathway; isopentenyl diphosphate from 1-deoxy-D-xylulose 5-phosphate: step 4/6. Involved in the biosynthesis of isopentenyl diphosphate (IPP) and dimethylallyl diphosphate (DMAPP), two major building blocks of isoprenoid compounds. Catalyzes the conversion of 4-diphosphocytidyl-2-C-methyl-D-erythritol 2-phosphate (CDP-ME2P) to 2-C-methyl-D-erythritol 2,4-cyclodiphosphate (ME-CPP) with a corresponding release of cytidine 5-monophosphate (CMP). The chain is 2-C-methyl-D-erythritol 2,4-cyclodiphosphate synthase from Salmonella dublin (strain CT_02021853).